Consider the following 1135-residue polypeptide: Large proline-rich protein bag6-A (1135 aa).

One can recognise a Ubiquitin-like domain in the interval 7–82; it reads MEVTVKTLDS…HLVERAPPQT (76 aa). Disordered stretches follow at residues 76 to 114, 194 to 238, 350 to 407, 498 to 522, 552 to 612, 661 to 698, 1075 to 1099, and 1116 to 1135; these read ERAP…RNGN, EQAA…SPSE, TGNG…PHPR, SFQF…VPGA, QGGS…QHLS, PVST…ESLP, KATG…EAQG, and NESY…RGDP. The segment covering 79 to 100 has biased composition (low complexity); the sequence is PPQTQPSTGGPSTSSSTSPTSS. A compositionally biased stretch (polar residues) spans 212–227; sequence RETLPQTTQNTDGQSN. Residues 228-237 are compositionally biased toward low complexity; the sequence is TTPTSHPSPS. Over residues 367 to 387 the composition is skewed to polar residues; the sequence is QPPSTNTSEPQRPNTENQPPS. Low complexity-rich tracts occupy residues 555-600 and 663-672; these read SSTS…SVPS and STAPTQSASQ. The span at 673–692 shows a compositional bias: pro residues; it reads APPPSSPPPPPAHSSPPPAA. Basic and acidic residues predominate over residues 1087–1099; sequence CVRRELDNSEAQG. Residues 1116–1129 show a composition bias toward polar residues; sequence NESYSAQRFPNTQR.

In terms of assembly, component of the bag6/bat3 complex.

The protein localises to the cytoplasm. Its subcellular location is the cytosol. The protein resides in the nucleus. It localises to the secreted. It is found in the extracellular exosome. In terms of biological role, ATP-independent molecular chaperone preventing the aggregation of misfolded and hydrophobic patches-containing proteins. Functions as part of a cytosolic protein quality control complex, the bag6/bat3 complex, which maintains these client proteins in a soluble state and participates in their proper delivery to the endoplasmic reticulum or alternatively can promote their sorting to the proteasome where they undergo degradation. The bag6/bat3 complex is involved in the post-translational delivery of tail-anchored/type II transmembrane proteins to the endoplasmic reticulum membrane. Similarly, the bag6/bat3 complex also functions as a sorting platform for proteins of the secretory pathway that are mislocalized to the cytosol either delivering them to the proteasome for degradation or to the endoplasmic reticulum. The bag6/bat3 complex also plays a role in the endoplasmic reticulum-associated degradation (ERAD), a quality control mechanism that eliminates unwanted proteins of the endoplasmic reticulum through their retrotranslocation to the cytosol and their targeting to the proteasome. It maintains these retrotranslocated proteins in an unfolded yet soluble state condition in the cytosol to ensure their proper delivery to the proteasome. Also required for selective ubiquitin-mediated degradation of defective nascent chain polypeptides by the proteasome. Also involved in endoplasmic reticulum stress-induced pre-emptive quality control, a mechanism that selectively attenuates the translocation of newly synthesized proteins into the endoplasmic reticulum and reroutes them to the cytosol for proteasomal degradation. May ensure the proper degradation of these proteins and thereby protects the endoplasmic reticulum from protein overload upon stress. By stabilizing a large spectrum of proteins, may indirectly affect different biological processes including apoptosis. By controlling the steady-state expression of the IGF1R receptor, indirectly regulates the insulin-like growth factor receptor signaling pathway. Functionally, when nuclear, may also act as a component of some chromatin regulator complex. In Xenopus laevis (African clawed frog), this protein is Large proline-rich protein bag6-A.